The sequence spans 467 residues: Coiled-coil domain-containing protein 71 (467 aa).

The tract at residues 81–105 is disordered; the sequence is PSQTKLQARAPNPTATSPPASAPRT. A compositionally biased stretch (low complexity) spans 88 to 105; it reads ARAPNPTATSPPASAPRT. Position 129 is a phosphoserine (S129). 2 disordered regions span residues 211-280 and 349-416; these read KLRK…GTKT and VRAK…KAWL. The segment covering 253 to 265 has biased composition (polar residues); the sequence is GHQSKTNRATGSP. Positions 279 to 359 form a coiled coil; it reads KTAQAKVART…RAKAKVARTQ (81 aa). The span at 349–380 shows a compositional bias: basic residues; the sequence is VRAKAKVARTQPRGRGRPKGSAKARTTRKGQK. The segment covering 392 to 401 has biased composition (basic and acidic residues); sequence RAEEAKDLPP.

This chain is Coiled-coil domain-containing protein 71 (CCDC71), found in Homo sapiens (Human).